Reading from the N-terminus, the 266-residue chain is Putative hydro-lyase VF_1377 (266 aa).

The protein belongs to the D-glutamate cyclase family.

This chain is Putative hydro-lyase VF_1377, found in Aliivibrio fischeri (strain ATCC 700601 / ES114) (Vibrio fischeri).